The sequence spans 161 residues: Zinc metalloproteinase/disintegrin (161 aa).

The Peptidase M12B domain maps to 1–72; sequence ERDLLVAVTM…ENPQCILNKH (72 aa). His12 is a binding site for Zn(2+). Glu13 is a catalytic residue. The Zn(2+) site is built by His16 and His22. Intrachain disulfides connect Cys27/Cys51 and Cys29/Cys34. Positions 73–88 are excised as a propeptide; sequence LRTDTVSTPVSGNELL. The Disintegrin domain maps to 89 to 161; the sequence is EAGEECDCGT…ADCPRNRFHA (73 aa). Intrachain disulfides connect Cys94–Cys109, Cys96–Cys104, Cys103–Cys126, Cys117–Cys123, Cys122–Cys147, and Cys135–Cys154. A Cell attachment site motif is present at residues 139–141; the sequence is RGD.

The protein belongs to the venom metalloproteinase (M12B) family. P-II subfamily. P-IIa sub-subfamily. In terms of assembly, monomer. In terms of tissue distribution, expressed by the venom gland.

It localises to the secreted. Its function is as follows. Impairs hemostasis in the envenomed animal. Disintegrin: inhibit platelet aggregation induced by ADP, thrombin, platelet-activating factor and collagen. Acts by inhibiting fibrinogen interaction with platelet receptors GPIIb/GPIIIa (ITGA2B/ITGB3). The polypeptide is Zinc metalloproteinase/disintegrin (Bothrops jararaca (Jararaca)).